Here is a 318-residue protein sequence, read N- to C-terminus: Cytochrome f (318 aa).

The signal sequence occupies residues 1 to 33; that stretch reads MKNTFSWIKKEITRSISLSLMIYIITRTSISNA. Heme contacts are provided by Tyr-34, Cys-54, Cys-57, and His-58. A helical membrane pass occupies residues 284-304; the sequence is VQGLLFFLASVILAQIFLVLK.

It belongs to the cytochrome f family. In terms of assembly, the 4 large subunits of the cytochrome b6-f complex are cytochrome b6, subunit IV (17 kDa polypeptide, petD), cytochrome f and the Rieske protein, while the 4 small subunits are PetG, PetL, PetM and PetN. The complex functions as a dimer. The cofactor is heme.

The protein resides in the plastid. The protein localises to the chloroplast thylakoid membrane. Functionally, component of the cytochrome b6-f complex, which mediates electron transfer between photosystem II (PSII) and photosystem I (PSI), cyclic electron flow around PSI, and state transitions. This chain is Cytochrome f, found in Oenothera biennis (German evening primrose).